A 334-amino-acid chain; its full sequence is Protein-methionine-sulfoxide reductase catalytic subunit MsrP (334 aa).

The segment at residues 1-44 (MKKNQFLKESDVTAESVFFMTRRQVLKALGISAAALSLPHAAHA) is a signal peptide (tat-type signal). Residues Asn-88, 91 to 92 (YE), Cys-146, Thr-181, Asn-233, Arg-238, and 249 to 251 (GIK) contribute to the Mo-molybdopterin site.

The protein belongs to the MsrP family. As to quaternary structure, heterodimer of a catalytic subunit (MsrP) and a heme-binding subunit (MsrQ). Requires Mo-molybdopterin as cofactor. Predicted to be exported by the Tat system. The position of the signal peptide cleavage has not been experimentally proven.

The protein resides in the periplasm. It carries out the reaction L-methionyl-[protein] + a quinone + H2O = L-methionyl-(S)-S-oxide-[protein] + a quinol. The catalysed reaction is L-methionyl-[protein] + a quinone + H2O = L-methionyl-(R)-S-oxide-[protein] + a quinol. In terms of biological role, part of the MsrPQ system that repairs oxidized periplasmic proteins containing methionine sulfoxide residues (Met-O), using respiratory chain electrons. Thus protects these proteins from oxidative-stress damage caused by reactive species of oxygen and chlorine generated by the host defense mechanisms. MsrPQ is essential for the maintenance of envelope integrity under bleach stress, rescuing a wide series of structurally unrelated periplasmic proteins from methionine oxidation, including the primary periplasmic chaperone SurA and the lipoprotein Pal. The catalytic subunit MsrP is non-stereospecific, being able to reduce both (R-) and (S-) diastereoisomers of methionine sulfoxide. This Escherichia coli (strain 55989 / EAEC) protein is Protein-methionine-sulfoxide reductase catalytic subunit MsrP.